The primary structure comprises 365 residues: Glucose 1-dehydrogenase 1 (365 aa).

Aspartate 38 is a binding site for Zn(2+). Threonine 40 is a binding site for substrate. Zn(2+) contacts are provided by histidine 63 and glutamate 64. The substrate site is built by glutamate 115 and glutamate 151. Glutamate 151 contributes to the Zn(2+) binding site. Residues 182–185 (NGSL), 207–208 (RR), 272–274 (LGV), and 301–303 (SVN) each bind NADP(+). Residue asparagine 303 coordinates substrate.

Belongs to the zinc-containing alcohol dehydrogenase family. Glucose 1-dehydrogenase subfamily. Zn(2+) serves as cofactor.

The enzyme catalyses D-glucose + NAD(+) = D-glucono-1,5-lactone + NADH + H(+). It catalyses the reaction D-glucose + NADP(+) = D-glucono-1,5-lactone + NADPH + H(+). In terms of biological role, catalyzes the NAD(P)(+)-dependent oxidation of D-glucose to D-gluconate via gluconolactone. Can utilize both NAD(+) and NADP(+) as electron acceptor. Is involved in the degradation of glucose through a modified Entner-Doudoroff pathway. The sequence is that of Glucose 1-dehydrogenase 1 from Haloterrigena turkmenica (strain ATCC 51198 / DSM 5511 / JCM 9101 / NCIMB 13204 / VKM B-1734 / 4k) (Halococcus turkmenicus).